The primary structure comprises 325 residues: ATP synthase gamma chain (325 aa).

This sequence belongs to the ATPase gamma chain family. As to quaternary structure, F-type ATPases have 2 components, CF(1) - the catalytic core - and CF(0) - the membrane proton channel. CF(1) has five subunits: alpha(3), beta(3), gamma(1), delta(1), epsilon(1). CF(0) has three main subunits: a, b and c.

The protein localises to the cell membrane. Produces ATP from ADP in the presence of a proton gradient across the membrane. The gamma chain is believed to be important in regulating ATPase activity and the flow of protons through the CF(0) complex. The sequence is that of ATP synthase gamma chain from Corynebacterium glutamicum (strain R).